An 832-amino-acid polypeptide reads, in one-letter code: Receptor-interacting serine/threonine-protein kinase 4 (832 aa).

The region spanning 22–286 (FTGWEKVGSG…QGNGLNGELI (265 aa)) is the Protein kinase domain. ATP is bound by residues 28-36 (VGSGGFGQV) and K51. K51 participates in a covalent cross-link: Glycyl lysine isopeptide (Lys-Gly) (interchain with G-Cter in ubiquitin). D143 functions as the Proton acceptor in the catalytic mechanism. A Glycyl lysine isopeptide (Lys-Gly) (interchain with G-Cter in ubiquitin) cross-link involves residue K145. Disordered regions lie at residues 325–368 (QEIT…RLKR) and 389–424 (SGVS…GVSS). Residues 329-342 (SETEDLCEKPDDEV) show a composition bias toward acidic residues. Residues 343 to 359 (KETAHDLDVKSPPEPRS) show a composition bias toward basic and acidic residues. Low complexity predominate over residues 403–424 (RSSSESKLPSSGSGKRLSGVSS). ANK repeat units lie at residues 485 to 514 (SGAS…NPNL), 518 to 547 (RGST…SVNA), 551 to 580 (DQWT…SVNE), 584 to 613 (EGRT…DVSL), 617 to 647 (DAWL…SVNA), 651 to 680 (DGRT…DVNV), 684 to 713 (LAQT…GKEA), 717 to 746 (DGYT…DVLA), 750 to 780 (LNQT…DLFD), and 782 to 811 (QGLS…HINL).

Belongs to the protein kinase superfamily. TKL Ser/Thr protein kinase family. Interacts with PRKCB. Interacts with TRAF1, TRAF2, TRAF3 and TRAF5. Interacts with BIRC2/c-IAP1, BIRC3/c-IAP2 and XIAP/BIRC4. May be phosphorylated by MAP3K2 and MAP3K3. In terms of processing, proteolytically cleaved by during Fas-induced apoptosis. Cleavage at Asp-388 and Asp-426. Post-translationally, polyubiquitinated with 'Lys-48' and 'Lys-63'-linked chains by BIRC2/c-IAP1 and BIRC3/c-IAP2, leading to activation of NF-kappa-B. In terms of tissue distribution, expressed in hair follicles and skin.

It is found in the cytoplasm. It localises to the membrane. It carries out the reaction L-seryl-[protein] + ATP = O-phospho-L-seryl-[protein] + ADP + H(+). The catalysed reaction is L-threonyl-[protein] + ATP = O-phospho-L-threonyl-[protein] + ADP + H(+). Its function is as follows. Serine/threonine protein kinase. Required for embryonic skin development and correct skin homeostasis in adults, via phosphorylation of PKP1 and subsequent promotion of keratinocyte differentiation and cell adhesion. It is a direct transcriptional target of TP63. Plays a role in NF-kappa-B activation. The sequence is that of Receptor-interacting serine/threonine-protein kinase 4 (RIPK4) from Homo sapiens (Human).